Consider the following 505-residue polypeptide: Deoxyguanosinetriphosphate triphosphohydrolase (505 aa).

In terms of domain architecture, HD spans 66 to 273; the sequence is RLTHSMEVQQ…MEAADDISYC (208 aa).

The protein belongs to the dGTPase family. Type 1 subfamily. As to quaternary structure, homotetramer. Requires Mg(2+) as cofactor.

It catalyses the reaction dGTP + H2O = 2'-deoxyguanosine + triphosphate + H(+). DGTPase preferentially hydrolyzes dGTP over the other canonical NTPs. This chain is Deoxyguanosinetriphosphate triphosphohydrolase, found in Escherichia coli O81 (strain ED1a).